The sequence spans 300 residues: 2-keto-3-deoxy-L-fuconate dehydrogenase (300 aa).

NAD(+) contacts are provided by residues 63–90 (LITAAGAGIGRESALACARAGAHVIATD) and Asp-112. Arg-198 is a binding site for substrate. Tyr-201 serves as the catalytic Proton acceptor. Residues Lys-205 and 234–238 (IKTPS) each bind NAD(+). Arg-242 and Arg-260 together coordinate substrate.

This sequence belongs to the short-chain dehydrogenases/reductases (SDR) family.

In terms of biological role, plays a role in the catabolism of L-fucose. Catalyzes the NAD(+)-dependent oxidation of 2-keo-3-deoxy-L-fuconate to 2,4-diketo-3-deoxy-L-fuconate. The polypeptide is 2-keto-3-deoxy-L-fuconate dehydrogenase (Xanthomonas campestris pv. campestris (strain ATCC 33913 / DSM 3586 / NCPPB 528 / LMG 568 / P 25)).